Here is a 511-residue protein sequence, read N- to C-terminus: Histidine ammonia-lyase (511 aa).

A cross-link (5-imidazolinone (Ala-Gly)) is located at residues 142-144; sequence ASG. Residue serine 143 is modified to 2,3-didehydroalanine (Ser).

This sequence belongs to the PAL/histidase family. Post-translationally, contains an active site 4-methylidene-imidazol-5-one (MIO), which is formed autocatalytically by cyclization and dehydration of residues Ala-Ser-Gly.

The protein localises to the cytoplasm. It catalyses the reaction L-histidine = trans-urocanate + NH4(+). It participates in amino-acid degradation; L-histidine degradation into L-glutamate; N-formimidoyl-L-glutamate from L-histidine: step 1/3. The sequence is that of Histidine ammonia-lyase from Brucella ovis (strain ATCC 25840 / 63/290 / NCTC 10512).